Here is a 488-residue protein sequence, read N- to C-terminus: Rhamnulokinase (488 aa).

Residue 13–17 coordinates ATP; it reads ASSGR. The cysteines at positions 68 and 222 are disulfide-linked. Residues G83 and 236-238 each bind substrate; that span reads HDT. D237 (proton acceptor) is an active-site residue. Residue T259 coordinates ATP. Residue N296 coordinates substrate. Q304 contributes to the ATP binding site. A disulfide bridge connects residues C353 and C370. G402 is an ATP binding site. C413 and C417 are oxidised to a cystine.

This sequence belongs to the rhamnulokinase family. Requires Mg(2+) as cofactor.

The enzyme catalyses L-rhamnulose + ATP = L-rhamnulose 1-phosphate + ADP + H(+). The protein operates within carbohydrate degradation; L-rhamnose degradation; glycerone phosphate from L-rhamnose: step 2/3. Functionally, involved in the catabolism of L-rhamnose (6-deoxy-L-mannose). Catalyzes the transfer of the gamma-phosphate group from ATP to the 1-hydroxyl group of L-rhamnulose to yield L-rhamnulose 1-phosphate. The protein is Rhamnulokinase of Klebsiella pneumoniae (strain 342).